Consider the following 186-residue polypeptide: Acireductone dioxygenase (186 aa).

Positions 103, 105, 109, and 147 each coordinate Fe(2+). Ni(2+) contacts are provided by H103, H105, E109, and H147.

The protein belongs to the acireductone dioxygenase (ARD) family. Monomer. Requires Fe(2+) as cofactor. Ni(2+) is required as a cofactor.

It carries out the reaction 1,2-dihydroxy-5-(methylsulfanyl)pent-1-en-3-one + O2 = 3-(methylsulfanyl)propanoate + CO + formate + 2 H(+). The catalysed reaction is 1,2-dihydroxy-5-(methylsulfanyl)pent-1-en-3-one + O2 = 4-methylsulfanyl-2-oxobutanoate + formate + 2 H(+). The protein operates within amino-acid biosynthesis; L-methionine biosynthesis via salvage pathway; L-methionine from S-methyl-5-thio-alpha-D-ribose 1-phosphate: step 5/6. In terms of biological role, catalyzes 2 different reactions between oxygen and the acireductone 1,2-dihydroxy-3-keto-5-methylthiopentene (DHK-MTPene) depending upon the metal bound in the active site. Fe-containing acireductone dioxygenase (Fe-ARD) produces formate and 2-keto-4-methylthiobutyrate (KMTB), the alpha-ketoacid precursor of methionine in the methionine recycle pathway. Ni-containing acireductone dioxygenase (Ni-ARD) produces methylthiopropionate, carbon monoxide and formate, and does not lie on the methionine recycle pathway. The sequence is that of Acireductone dioxygenase from Parasynechococcus marenigrum (strain WH8102).